We begin with the raw amino-acid sequence, 152 residues long: Mitochondrial holo-[acyl-carrier-protein] synthase (152 aa).

This sequence belongs to the P-Pant transferase superfamily. AcpS family.

It is found in the mitochondrion. It carries out the reaction apo-[ACP] + CoA = holo-[ACP] + adenosine 3',5'-bisphosphate + H(+). Its function is as follows. Transfers the 4'-phosphopantetheine moiety from coenzyme A to a Ser of mitochondrial acyl-carrier-protein. In Candida glabrata (strain ATCC 2001 / BCRC 20586 / JCM 3761 / NBRC 0622 / NRRL Y-65 / CBS 138) (Yeast), this protein is Mitochondrial holo-[acyl-carrier-protein] synthase (PPT2).